We begin with the raw amino-acid sequence, 212 residues long: Elongation factor Ts (212 aa).

Positions 82–85 (SDFV) are involved in Mg(2+) ion dislocation from EF-Tu.

This sequence belongs to the EF-Ts family.

It is found in the cytoplasm. Functionally, associates with the EF-Tu.GDP complex and induces the exchange of GDP to GTP. It remains bound to the aminoacyl-tRNA.EF-Tu.GTP complex up to the GTP hydrolysis stage on the ribosome. In Solibacter usitatus (strain Ellin6076), this protein is Elongation factor Ts.